A 220-amino-acid polypeptide reads, in one-letter code: Large ribosomal subunit protein uL1 (220 aa).

The protein belongs to the universal ribosomal protein uL1 family. As to quaternary structure, part of the 50S ribosomal subunit.

Binds directly to 23S rRNA. The L1 stalk is quite mobile in the ribosome, and is involved in E site tRNA release. Functionally, protein L1 is also a translational repressor protein, it controls the translation of the L11 operon by binding to its mRNA. The sequence is that of Large ribosomal subunit protein uL1 from Ehrlichia canis (strain Jake).